Here is a 218-residue protein sequence, read N- to C-terminus: Imidazole glycerol phosphate synthase subunit HisH (218 aa).

The Glutamine amidotransferase type-1 domain maps to 7 to 211 (STVIIDTGCA…LALDKASLDA (205 aa)). Cys-82 (nucleophile) is an active-site residue. Active-site residues include His-186 and Glu-188.

As to quaternary structure, heterodimer of HisH and HisF.

Its subcellular location is the cytoplasm. The enzyme catalyses 5-[(5-phospho-1-deoxy-D-ribulos-1-ylimino)methylamino]-1-(5-phospho-beta-D-ribosyl)imidazole-4-carboxamide + L-glutamine = D-erythro-1-(imidazol-4-yl)glycerol 3-phosphate + 5-amino-1-(5-phospho-beta-D-ribosyl)imidazole-4-carboxamide + L-glutamate + H(+). The catalysed reaction is L-glutamine + H2O = L-glutamate + NH4(+). It functions in the pathway amino-acid biosynthesis; L-histidine biosynthesis; L-histidine from 5-phospho-alpha-D-ribose 1-diphosphate: step 5/9. In terms of biological role, IGPS catalyzes the conversion of PRFAR and glutamine to IGP, AICAR and glutamate. The HisH subunit catalyzes the hydrolysis of glutamine to glutamate and ammonia as part of the synthesis of IGP and AICAR. The resulting ammonia molecule is channeled to the active site of HisF. The polypeptide is Imidazole glycerol phosphate synthase subunit HisH (Shewanella sediminis (strain HAW-EB3)).